A 149-amino-acid chain; its full sequence is Calmodulin (149 aa).

A2 bears the N-acetylalanine mark. EF-hand domains follow at residues 8 to 43 (EQIS…LGQN), 44 to 79 (PTEA…KMRD), 81 to 116 (DSEE…LGEK), and 117 to 149 (LTDN…MLSK). Ca(2+)-binding residues include D21, D23, D25, T27, E32, D57, D59, N61, T63, E68, D94, D96, N98, Y100, E105, D130, D132, D134, Q136, and E141.

This sequence belongs to the calmodulin family.

In terms of biological role, calmodulin mediates the control of a large number of enzymes, ion channels and other proteins by Ca(2+). Among the enzymes to be stimulated by the calmodulin-Ca(2+) complex are a number of protein kinases and phosphatases. The sequence is that of Calmodulin (CMD1) from Pleurotus ostreatus (Oyster mushroom).